Consider the following 615-residue polypeptide: Vitamin B12 transporter BtuB (615 aa).

The N-terminal stretch at 1–20 is a signal peptide; it reads MIKKVSLMTALSVTAFSGWA. Residues 25 to 32 carry the TonB box motif; it reads DSLVVTAN. The TBDR plug domain occupies 37 to 151; sequence PANTVLAPTS…IGGVVNIITT (115 aa). Residues serine 84, asparagine 91, and 109–110 contribute to the cyanocob(III)alamin site; that span reads VT. The TBDR beta-barrel domain occupies 154–615; it reads KDGTTLNAGV…EYTLSGSYTF (462 aa). The next 3 beta stranded transmembrane spans lie at 157-164, 168-177, and 183-194; these read TTLNAGVG, YQNYGGSTQQ, and TRVTLAGDYTYT. Residues aspartate 198, glutamine 210, aspartate 212, and aspartate 214 each coordinate Ca(2+). The next 2 beta stranded transmembrane spans lie at 216 to 226 and 231 to 247; these read YMNKTIYGALE and DQWSGFVRGFGYSNRTA. Ca(2+) contacts are provided by tyrosine 248 and aspartate 249. Alanine 250 is a binding site for cyanocob(III)alamin. Aspartate 262 contacts Ca(2+). A run of 17 beta stranded transmembrane segments spans residues 264–278, 280–297, 310–326, 329–338, 354–370, 372–382, 386–401, 404–418, 435–444, 450–459, 474–491, 495–510, 518–530, 536–551, 559–573, 586–597, and 603–615; these read RQLYSQTWDTGLRFN, GIFHSQLLSSYSHSKDYN, TLDEIKQYNVQWTNSVD, HGNVGAGVDW, TNLRNTGVYLTALQKFG, FTLEGAARSDD, FGRHGTWQSSAAWEFI, YRFIASYGTAYKAPN, ESKQWEGAFE, VSWRVSAYRN, YYNVGKARIKGVEATASF, PLTHTVGYDYVDARNA, RRAKQQVKYQLDT, DWSLTYHYLGTRYDTD, KVKMGGVSLWDLAVS, IANLFDKDYETV, and AGREYTLSGSYTF. A cyanocob(III)alamin-binding site is contributed by threonine 310. Arginine 518 contacts cyanocob(III)alamin. The short motif at 598-615 is the TonB C-terminal box element; sequence YGYETAGREYTLSGSYTF.

Belongs to the TonB-dependent receptor family. BtuB (TC 1.B.14.3.1) subfamily.

The protein resides in the cell outer membrane. Functionally, involved in the active translocation of vitamin B12 (cyanocobalamin) across the outer membrane to the periplasmic space. It derives its energy for transport by interacting with the trans-periplasmic membrane protein TonB. The polypeptide is Vitamin B12 transporter BtuB (Enterobacter sp. (strain 638)).